The sequence spans 312 residues: 4-hydroxy-3-methylbut-2-enyl diphosphate reductase (312 aa).

Cysteine 14 provides a ligand contact to [4Fe-4S] cluster. Histidine 43 and histidine 76 together coordinate (2E)-4-hydroxy-3-methylbut-2-enyl diphosphate. Dimethylallyl diphosphate is bound by residues histidine 43 and histidine 76. 2 residues coordinate isopentenyl diphosphate: histidine 43 and histidine 76. Residue cysteine 98 participates in [4Fe-4S] cluster binding. Histidine 125 is a (2E)-4-hydroxy-3-methylbut-2-enyl diphosphate binding site. Histidine 125 contributes to the dimethylallyl diphosphate binding site. Histidine 125 serves as a coordination point for isopentenyl diphosphate. Residue glutamate 127 is the Proton donor of the active site. A (2E)-4-hydroxy-3-methylbut-2-enyl diphosphate-binding site is contributed by threonine 165. Cysteine 195 provides a ligand contact to [4Fe-4S] cluster. (2E)-4-hydroxy-3-methylbut-2-enyl diphosphate-binding residues include serine 223, serine 224, asparagine 225, and serine 269. Serine 223, serine 224, asparagine 225, and serine 269 together coordinate dimethylallyl diphosphate. Serine 223, serine 224, asparagine 225, and serine 269 together coordinate isopentenyl diphosphate.

It belongs to the IspH family. Requires [4Fe-4S] cluster as cofactor.

The enzyme catalyses isopentenyl diphosphate + 2 oxidized [2Fe-2S]-[ferredoxin] + H2O = (2E)-4-hydroxy-3-methylbut-2-enyl diphosphate + 2 reduced [2Fe-2S]-[ferredoxin] + 2 H(+). It carries out the reaction dimethylallyl diphosphate + 2 oxidized [2Fe-2S]-[ferredoxin] + H2O = (2E)-4-hydroxy-3-methylbut-2-enyl diphosphate + 2 reduced [2Fe-2S]-[ferredoxin] + 2 H(+). The protein operates within isoprenoid biosynthesis; dimethylallyl diphosphate biosynthesis; dimethylallyl diphosphate from (2E)-4-hydroxy-3-methylbutenyl diphosphate: step 1/1. It participates in isoprenoid biosynthesis; isopentenyl diphosphate biosynthesis via DXP pathway; isopentenyl diphosphate from 1-deoxy-D-xylulose 5-phosphate: step 6/6. In terms of biological role, catalyzes the conversion of 1-hydroxy-2-methyl-2-(E)-butenyl 4-diphosphate (HMBPP) into a mixture of isopentenyl diphosphate (IPP) and dimethylallyl diphosphate (DMAPP). Acts in the terminal step of the DOXP/MEP pathway for isoprenoid precursor biosynthesis. This is 4-hydroxy-3-methylbut-2-enyl diphosphate reductase from Leptospira interrogans serogroup Icterohaemorrhagiae serovar copenhageni (strain Fiocruz L1-130).